Reading from the N-terminus, the 222-residue chain is Large ribosomal subunit protein uL1 (222 aa).

It belongs to the universal ribosomal protein uL1 family. As to quaternary structure, part of the 50S ribosomal subunit.

Functionally, binds directly to 23S rRNA. Probably involved in E site tRNA release. In terms of biological role, protein L1 is also a translational repressor protein, it controls the translation of its operon by binding to its mRNA. The sequence is that of Large ribosomal subunit protein uL1 from Pyrobaculum arsenaticum (strain DSM 13514 / JCM 11321 / PZ6).